The following is a 353-amino-acid chain: Guanine nucleotide-binding protein alpha-3 subunit (353 aa).

Gly-2 carries the N-myristoyl glycine lipid modification. Cys-4 carries S-palmitoyl cysteine lipidation. Residues 32–353 form the G-alpha domain; the sequence is KVVKLLLLGA…IQANLQGCGL (322 aa). Positions 35–48 are G1 motif; sequence KLLLLGAGECGKST. GTP is bound by residues 40–47, 176–182, 201–205, 270–273, and Ala-326; these read GAGECGKS, LLSRIKT, DVGGQ, and NKKD. Mg(2+) is bound by residues Ser-47 and Thr-182. The segment at 174–182 is G2 motif; sequence DILLSRIKT. Residues 197–206 are G3 motif; that stretch reads FRVFDVGGQR. Positions 266–273 are G4 motif; it reads ILFLNKKD. A G5 motif region spans residues 324 to 329; the sequence is TCATDT.

Belongs to the G-alpha family. G(q) subfamily. G proteins are composed of 3 units; alpha, beta and gamma. The alpha chain contains the guanine nucleotide binding site.

In terms of biological role, guanine nucleotide-binding proteins (G proteins) are involved as modulators or transducers in various transmembrane signaling systems. Promotes transcription of 3',5'-cyclic phosphodiesterases pde-1 and pde-5, leading to reduced cGMP levels in sensory neurons. This causes suppression of insulin production and signaling which leads to increased daf-16 activity and contributes to increased adult lifespan and resistance to oxidative stress. In addition, by reducing cGMP levels, inhibits TGF-beta signaling pathways. Involved in behavioral response to P.aeruginosa by controlling the expression of daf-7, a member of the TGF-beta family, in ASJ sensory neurons. Plays a role in the avoidance response to the noxious chemical quinine in ASH sensory neurons. This Caenorhabditis elegans protein is Guanine nucleotide-binding protein alpha-3 subunit.